Here is a 442-residue protein sequence, read N- to C-terminus: Thymidine phosphorylase (442 aa).

This sequence belongs to the thymidine/pyrimidine-nucleoside phosphorylase family. As to quaternary structure, homodimer.

It catalyses the reaction thymidine + phosphate = 2-deoxy-alpha-D-ribose 1-phosphate + thymine. Its pathway is pyrimidine metabolism; dTMP biosynthesis via salvage pathway; dTMP from thymine: step 1/2. The enzymes which catalyze the reversible phosphorolysis of pyrimidine nucleosides are involved in the degradation of these compounds and in their utilization as carbon and energy sources, or in the rescue of pyrimidine bases for nucleotide synthesis. The polypeptide is Thymidine phosphorylase (Vibrio parahaemolyticus serotype O3:K6 (strain RIMD 2210633)).